A 785-amino-acid chain; its full sequence is Phenylalanine--tRNA ligase beta subunit (785 aa).

In terms of domain architecture, tRNA-binding spans 39–147 (FPIPRGVVFA…DALPPGTPLA (109 aa)). A B5 domain is found at 399-474 (KPPEAIPFRP…RIQGYETIPL (76 aa)). Residues aspartate 452, aspartate 458, glutamate 461, and glutamate 462 each contribute to the Mg(2+) site. The FDX-ACB domain occupies 688–780 (SRHPAAFRDL…ALRARGFGLR (93 aa)).

Belongs to the phenylalanyl-tRNA synthetase beta subunit family. Type 1 subfamily. In terms of assembly, tetramer of two alpha and two beta subunits. It depends on Mg(2+) as a cofactor.

It is found in the cytoplasm. It catalyses the reaction tRNA(Phe) + L-phenylalanine + ATP = L-phenylalanyl-tRNA(Phe) + AMP + diphosphate + H(+). The polypeptide is Phenylalanine--tRNA ligase beta subunit (Thermus thermophilus (strain ATCC BAA-163 / DSM 7039 / HB27)).